Here is a 360-residue protein sequence, read N- to C-terminus: Malonyl CoA-acyl carrier protein transacylase, mitochondrial (360 aa).

The transit peptide at 1–24 directs the protein to the mitochondrion; sequence MKLLTFPGQGTSISISILKAIIRN. Catalysis depends on residues serine 105 and histidine 235.

This sequence belongs to the FabD family.

The protein localises to the mitochondrion. It carries out the reaction holo-[ACP] + malonyl-CoA = malonyl-[ACP] + CoA. It participates in lipid metabolism; fatty acid biosynthesis. Involved in biosynthesis of fatty acids in mitochondria. This Saccharomyces cerevisiae (strain ATCC 204508 / S288c) (Baker's yeast) protein is Malonyl CoA-acyl carrier protein transacylase, mitochondrial (MCT1).